The following is a 2141-amino-acid chain: Oxygen-regulated protein 1 (2141 aa).

A compositionally biased stretch (polar residues) spans 1-10 (MSETSSTSVS). A disordered region spans residues 1–20 (MSETSSTSVSMIHRSFEGQG). One can recognise a Doublecortin 1 domain in the interval 34 to 116 (KKISFYKSGD…RRKVQPVDLD (83 aa)). Positions 126–149 (LSSRAISAHAQRSPPTSIGAAGAP) are disordered. The Doublecortin 2 domain occupies 156–235 (RRLLVFRNGD…REPFKPGNYD (80 aa)). 3 disordered regions span residues 259–278 (RSES…SQIY), 1432–1458 (YTSS…SSER), and 1589–1612 (DWSE…GPNG). Over residues 268-278 (HVPSSPRSQIY) the composition is skewed to polar residues. Residues 1435–1444 (SDKEDSKTSE) are compositionally biased toward basic and acidic residues. Polar residues-rich tracts occupy residues 1448–1458 (SITNSMTSSER) and 1598–1610 (ENEQ…SDGP).

Interacts (via the doublecortin domains) with microtubules. Interacts with RP1L1. Interacts with MAK.

The protein resides in the cytoplasm. It localises to the cytoskeleton. It is found in the cilium axoneme. Its subcellular location is the cell projection. The protein localises to the cilium. The protein resides in the photoreceptor outer segment. In terms of biological role, microtubule-associated protein regulating the stability and length of the microtubule-based axoneme of photoreceptors. Required for the differentiation of photoreceptor cells, it plays a role in the organization of the outer segment of rod and cone photoreceptors ensuring the correct orientation and higher-order stacking of outer segment disks along the photoreceptor axoneme. In Canis lupus familiaris (Dog), this protein is Oxygen-regulated protein 1 (RP1).